A 133-amino-acid polypeptide reads, in one-letter code: Lymphocyte antigen 6 complex locus protein G6d (133 aa).

An N-terminal signal peptide occupies residues 1–19 (MKPQFVGILLSSLLGAALG). Positions 22-116 (MRCYNCGGSP…ASHVAPAGIL (95 aa)) constitute a UPAR/Ly6 domain. An intrachain disulfide couples cysteine 27 to cysteine 35. O-linked (GalNAc...) threonine glycans are attached at residues threonine 40 and threonine 41. 2 disulfides stabilise this stretch: cysteine 42–cysteine 71 and cysteine 77–cysteine 96. Serine 104 is lipidated: GPI-anchor amidated serine. The propeptide at 105-133 (AVASHVAPAGILAAAATALTCLLPGLWSG) is removed in mature form.

In terms of assembly, homodimer. In terms of processing, O-glycosylated. As to expression, expressed in the adult lung, and in fetal liver, lung, kidney, brain and spleen.

The protein resides in the cell membrane. It localises to the cell projection. It is found in the filopodium. This Homo sapiens (Human) protein is Lymphocyte antigen 6 complex locus protein G6d (LY6G6D).